A 66-amino-acid chain; its full sequence is Metallothionein (66 aa).

An N-acetylserine modification is found at Ser1. Residues Cys9, Cys13, Cys18, Cys20, Cys24, Cys26, Cys30, Cys32, Cys35, Cys38, Cys40, Cys45, Cys47, Cys51, Cys57, Cys59, Cys63, and Cys65 each coordinate Cd(2+).

This sequence belongs to the metallothionein superfamily. Type 2 family.

The metallothioneins are involved in the cellular sequestration of toxic metal ions and regulation of essential trace elements. The sequence is that of Metallothionein from Arianta arbustorum (Land snail).